Consider the following 385-residue polypeptide: Deoxyguanosinetriphosphate triphosphohydrolase-like protein (385 aa).

A compositionally biased stretch (basic and acidic residues) spans 1–14; it reads MTEGVEGRSQERSD. The disordered stretch occupies residues 1 to 23; the sequence is MTEGVEGRSQERSDLAGFAARSA. Residues 75–204 form the HD domain; sequence RLTHSLEVAQ…INYADEIAYN (130 aa).

This sequence belongs to the dGTPase family. Type 2 subfamily.

The protein is Deoxyguanosinetriphosphate triphosphohydrolase-like protein of Geobacter metallireducens (strain ATCC 53774 / DSM 7210 / GS-15).